The sequence spans 303 residues: MEDYVKIEKIGEGTYGVVYKGRHKSTGQVVAMKKIRLESEEEGVPSTAVREVSLLQELKHPNVVRLLDVLMQESRLYLIFEFLSMDLKKYLDSIPSGQYMDPMLVKSYLYQILEGIYFCHRRRVLHRDLKPQNLLIDNKGVIKLADFGLARAFGVPVRVYTHEVVTLWYRAPEVLLGSPRYSTPVDVWSTGTIFAELATKKPLFHGDSEIDQLFRIFRTLGTPNNDVWPDVESLPDYKNTFPKWKGGSLSSMVKNLDKNGLDLLAKMLIYNPPKRISAREAMTHPYFDDLDKSTLPAACINGV.

Positions 4–287 (YVKIEKIGEG…AREAMTHPYF (284 aa)) constitute a Protein kinase domain. ATP is bound by residues 10–18 (IGEGTYGVV) and Lys33. Thr14 is subject to Phosphothreonine. Tyr15 is subject to Phosphotyrosine; by wee1 and wee2. Asp128 serves as the catalytic Proton acceptor. Thr161 carries the phosphothreonine; by cak modification.

It belongs to the protein kinase superfamily. CMGC Ser/Thr protein kinase family. CDC2/CDKX subfamily. In terms of assembly, forms a stable but non-covalent complex with cyclin B in mature oocytes. Phosphorylation at Tyr-15 by wee1 and wee2 inhibits the protein kinase activity and acts negative regulator of entry into mitosis (G2 to M transition).

It localises to the nucleus. Its subcellular location is the cytoplasm. It is found in the cytoskeleton. The protein localises to the microtubule organizing center. The protein resides in the centrosome. It carries out the reaction L-seryl-[protein] + ATP = O-phospho-L-seryl-[protein] + ADP + H(+). The catalysed reaction is L-threonyl-[protein] + ATP = O-phospho-L-threonyl-[protein] + ADP + H(+). The enzyme catalyses [DNA-directed RNA polymerase] + ATP = phospho-[DNA-directed RNA polymerase] + ADP + H(+). Phosphorylation at Thr-14 or Tyr-15 inactivates the enzyme, while phosphorylation at Thr-161 activates it. Plays a key role in the control of the eukaryotic cell cycle by modulating the centrosome cycle as well as mitotic onset; promotes G2-M transition via association with multiple interphase cyclins. During G2 and early mitosis, CDC25A/B/C-mediated dephosphorylation activates CDK1/cyclin complexes which phosphorylate several substrates that trigger at least centrosome separation, Golgi dynamics, nuclear envelope breakdown and chromosome condensation. Once chromosomes are condensed and aligned at the metaphase plate, CDK1 activity is switched off by WEE1- and PKMYT1-mediated phosphorylation to allow sister chromatid separation, chromosome decondensation, reformation of the nuclear envelope and cytokinesis. Catalyzes lamin (LMNA, LMNB1 and LMNB2) phosphorylation at the onset of mitosis, promoting nuclear envelope breakdown. The polypeptide is Cyclin-dependent kinase 1 (cdk1) (Oryzias luzonensis (Luzon ricefish)).